Reading from the N-terminus, the 263-residue chain is MRIQRTPAPPKAPRALLCVHGAGCSPAIFRVQLSKLRAALREDFEFVYATAPFPSAPGPGILPTFEGLGPYYTWFEGSPSGAAAKGDNSNSNDSNSSPTVHDRLAAVHEPVRRAIAEWQTQNPSIPIVGTVSFSEGALVTALLLWQQQMGRIPWLPVMQVAMFICCWYQHEATQYMREEVGCGGDGGIDGEKLVIRGVLSLHLQGRDDFALAGSKMVVAQHFVPGEAQVLEFAGRHHFPNRPRDVLETVKRFRQLCVRARVIG.

Active-site charge relay system residues include S134, D208, and H236.

This sequence belongs to the LovG family.

It carries out the reaction dihydromonacolin L-[lovastatin nonaketide synthase] + H2O = holo-[lovastatin nonaketide synthase] + dihydromonacolin L carboxylate + H(+). It participates in polyketide biosynthesis; lovastatin biosynthesis. Esterase; part of the gene cluster that mediates the biosynthesis of monakolin K, also known as lovastatin, and which acts as a potent competitive inhibitor of HMG-CoA reductase. Monakolin K biosynthesis is performed in two stages. The first stage is catalyzed by the nonaketide synthase mokA, which belongs to type I polyketide synthases and catalyzes the iterative nine-step formation of the polyketide. This PKS stage completed by the action of dehydrogenase mokE, which catalyzes the NADPH-dependent reduction of the unsaturated tetra-, penta- and heptaketide intermediates that arise during the mokA-mediated biosynthesis of the nonaketide chain and leads to dihydromonacolin L. Covalently bound dihydromonacolin L is released from mokA by the mokD esterase. Conversion of dihydromonacolin L into monacolin L and then monacolin J is subsequently performed with the participation of molecular oxygen and P450 monoogygenase mokC. Finally, mokF performs the conversion of monacoline J to monacoline K through the addition of the side-chain diketide moiety (2R)-2-methylbutanoate produced by the diketide synthase mokB. This Monascus pilosus (Red mold) protein is Esterase mokD.